Here is a 480-residue protein sequence, read N- to C-terminus: Glutamyl-tRNA(Gln) amidotransferase subunit A (480 aa).

Active-site charge relay system residues include Lys74 and Ser149. Ser173 serves as the catalytic Acyl-ester intermediate.

It belongs to the amidase family. GatA subfamily. Heterotrimer of A, B and C subunits.

It carries out the reaction L-glutamyl-tRNA(Gln) + L-glutamine + ATP + H2O = L-glutaminyl-tRNA(Gln) + L-glutamate + ADP + phosphate + H(+). Functionally, allows the formation of correctly charged Gln-tRNA(Gln) through the transamidation of misacylated Glu-tRNA(Gln) in organisms which lack glutaminyl-tRNA synthetase. The reaction takes place in the presence of glutamine and ATP through an activated gamma-phospho-Glu-tRNA(Gln). This Prochlorococcus marinus (strain MIT 9312) protein is Glutamyl-tRNA(Gln) amidotransferase subunit A.